We begin with the raw amino-acid sequence, 585 residues long: MITQTELDNCLQWAQNNGAFIDPKISFRITEDAGVSAFVNEKFSPKPDQALIRVPETLLITSQQALSEFSQAANERSLLNSVTQLYLSKLKFGTDAVHLKSFYKPYLDVLPLHLPQPYFWSTDEVMNLHGTDVYLTMRDTLNKLVKEWRMLFQALSIEHSSQDKQFLSLFQENKDSAVVPLEQFCAHINGCKLEDSEWNSFVAYLWSYCIFNSRAFPRVILGRAGTDRTNLNEGFLYPIVDLLNHKNDVPVRWEMNEQNELCFMSQTTTFSAQDELFNNYGNISNEKCLLNYGFWDSSNKFDFSRLTLKLPSTLVSGLPVDFNKSGNFVTDDGETTILQFSLKISEPLPPVLLALFAYLSKLKSEETPTVRSVLEGIDQLTSVVSQRLLFYKNFKIKTSSTQKLRPHVIKLIKLYYQDNKKILNATTEKLSVLQKKIYSNNKEFSLSFKTIFKNDKIFANSLLLVFGAINYEDLITKDCLNDALLLWIVKLINDKSNNQGGFIKQTFKEVSDSIVIEKEDVMEFLPFYKKYFPNLSERIPEIYSVGDWGIRQFIVADTAIDRLVWIRKSNKEPIFLMKKAYDLQI.

Residues 23 to 281 form the SET domain; that stretch reads PKISFRITED…AQDELFNNYG (259 aa). Position 280 (tyrosine 280) interacts with S-adenosyl-L-methionine.

It belongs to the class V-like SAM-binding methyltransferase superfamily. RKM1 family.

It localises to the cytoplasm. Functionally, S-adenosyl-L-methionine-dependent protein-lysine N-methyltransferase that monomethylates elongation factor 1-alpha (TEF1/TEF2) at 'Lys-30'. This is Protein-lysine N-methyltransferase EFM1 from Saccharomyces cerevisiae (strain ATCC 204508 / S288c) (Baker's yeast).